Here is a 179-residue protein sequence, read N- to C-terminus: Small ribosomal subunit protein uS5 (179 aa).

In terms of domain architecture, S5 DRBM spans 22–85 (MIEKLVAVNR…EYARKTMANV (64 aa)).

This sequence belongs to the universal ribosomal protein uS5 family. As to quaternary structure, part of the 30S ribosomal subunit. Contacts proteins S4 and S8.

Its function is as follows. With S4 and S12 plays an important role in translational accuracy. In terms of biological role, located at the back of the 30S subunit body where it stabilizes the conformation of the head with respect to the body. This Xylella fastidiosa (strain 9a5c) protein is Small ribosomal subunit protein uS5.